The sequence spans 162 residues: Methyl-coenzyme M reductase II operon protein D (162 aa).

MCR is composed of three subunits: alpha, beta, and gamma. The function of protein D is not known.

The protein is Methyl-coenzyme M reductase II operon protein D (mrtD) of Methanothermobacter thermautotrophicus (strain ATCC 29096 / DSM 1053 / JCM 10044 / NBRC 100330 / Delta H) (Methanobacterium thermoautotrophicum).